The primary structure comprises 255 residues: Proteasome subunit alpha (255 aa).

Positions L228 to L255 are disordered. Over residues P232–L255 the composition is skewed to low complexity.

The protein belongs to the peptidase T1A family. The 20S proteasome core is composed of 14 alpha and 14 beta subunits that assemble into four stacked heptameric rings, resulting in a barrel-shaped structure. The two inner rings, each composed of seven catalytic beta subunits, are sandwiched by two outer rings, each composed of seven alpha subunits. The catalytic chamber with the active sites is on the inside of the barrel. Has a gated structure, the ends of the cylinder being occluded by the N-termini of the alpha-subunits. Is capped by the proteasome-associated ATPase, ARC.

It localises to the cytoplasm. It participates in protein degradation; proteasomal Pup-dependent pathway. Its activity is regulated as follows. The formation of the proteasomal ATPase ARC-20S proteasome complex, likely via the docking of the C-termini of ARC into the intersubunit pockets in the alpha-rings, may trigger opening of the gate for substrate entry. Interconversion between the open-gate and close-gate conformations leads to a dynamic regulation of the 20S proteasome proteolysis activity. Functionally, component of the proteasome core, a large protease complex with broad specificity involved in protein degradation. This is Proteasome subunit alpha from Sanguibacter keddieii (strain ATCC 51767 / DSM 10542 / NCFB 3025 / ST-74).